The chain runs to 57 residues: uncharacterized protein (57 aa).

This is an uncharacterized protein from Bacillus subtilis (strain 168).